A 482-amino-acid chain; its full sequence is Zinc finger protein 385B (482 aa).

The interval Met-1–Leu-105 is required for induction of apoptosis. 2 consecutive Matrin-type zinc fingers follow at residues Ser-34 to Gln-64 and Ile-169 to Ala-199. Disordered regions lie at residues Asp-54–Gln-75, Lys-189–Leu-259, and Leu-268–Glu-287. The tract at residues Pro-106–Tyr-482 is interaction with p53/TP53. Residues Ser-231–Lys-240 show a composition bias toward basic and acidic residues. A Matrin-type 3 zinc finger spans residues Lys-294–Arg-328. Disordered stretches follow at residues Ala-331–Gly-352 and His-378–Tyr-397. The Matrin-type 4 zinc-finger motif lies at Phe-360–Gly-390.

In terms of assembly, interacts with p53/TP53; the interaction is direct.

The protein resides in the nucleus. May play a role in p53/TP53-mediated apoptosis. The chain is Zinc finger protein 385B (Znf385b) from Mus musculus (Mouse).